A 367-amino-acid chain; its full sequence is Phosphoribosylaminoimidazole-succinocarboxamide synthase (367 aa).

Belongs to the SAICAR synthetase family.

The enzyme catalyses 5-amino-1-(5-phospho-D-ribosyl)imidazole-4-carboxylate + L-aspartate + ATP = (2S)-2-[5-amino-1-(5-phospho-beta-D-ribosyl)imidazole-4-carboxamido]succinate + ADP + phosphate + 2 H(+). It functions in the pathway purine metabolism; IMP biosynthesis via de novo pathway; 5-amino-1-(5-phospho-D-ribosyl)imidazole-4-carboxamide from 5-amino-1-(5-phospho-D-ribosyl)imidazole-4-carboxylate: step 1/2. This is Phosphoribosylaminoimidazole-succinocarboxamide synthase from Vibrio campbellii (strain ATCC BAA-1116).